The sequence spans 329 residues: DNA-directed RNA polymerase subunit alpha (329 aa).

Positions methionine 1 to arginine 235 are alpha N-terminal domain (alpha-NTD). Residues phenylalanine 249–aspartate 329 are alpha C-terminal domain (alpha-CTD).

This sequence belongs to the RNA polymerase alpha chain family. Homodimer. The RNAP catalytic core consists of 2 alpha, 1 beta, 1 beta' and 1 omega subunit. When a sigma factor is associated with the core the holoenzyme is formed, which can initiate transcription.

It carries out the reaction RNA(n) + a ribonucleoside 5'-triphosphate = RNA(n+1) + diphosphate. Functionally, DNA-dependent RNA polymerase catalyzes the transcription of DNA into RNA using the four ribonucleoside triphosphates as substrates. The chain is DNA-directed RNA polymerase subunit alpha from Aliivibrio fischeri (strain ATCC 700601 / ES114) (Vibrio fischeri).